The sequence spans 253 residues: Protein phosphatase CheZ (253 aa).

The segment at 1–84 is disordered; it reads MTQEELDALM…EWPPPPPTEE (84 aa). Residues 21–69 are compositionally biased toward basic and acidic residues; sequence LETKEETKEEAKEEAKEEAKEEAKEKEEIKEESSSQKMTVKKEDAEKYG.

The protein belongs to the CheZ family. In terms of assembly, interacts with ChePep; this interaction is essential for each other polar localization.

It is found in the cytoplasm. Its function is as follows. Plays an important role in bacterial chemotaxis signal transduction pathway by accelerating the dephosphorylation of phosphorylated CheY (CheY-P). Also dephosphorylates CheV2 but not CheV1 or CheV3. In addition, forms a distinct chemotaxis regulatory complex with ChePep independently of the core chemotaxis signaling proteins. The chain is Protein phosphatase CheZ from Helicobacter pylori (strain ATCC 700392 / 26695) (Campylobacter pylori).